The chain runs to 133 residues: Ribosome-binding factor A (133 aa).

It belongs to the RbfA family. Monomer. Binds 30S ribosomal subunits, but not 50S ribosomal subunits or 70S ribosomes.

It is found in the cytoplasm. One of several proteins that assist in the late maturation steps of the functional core of the 30S ribosomal subunit. Associates with free 30S ribosomal subunits (but not with 30S subunits that are part of 70S ribosomes or polysomes). Required for efficient processing of 16S rRNA. May interact with the 5'-terminal helix region of 16S rRNA. This is Ribosome-binding factor A from Proteus mirabilis (strain HI4320).